Reading from the N-terminus, the 172-residue chain is Shikimate kinase (172 aa).

12–17 (GSGKTS) contributes to the ATP binding site. Thr16 provides a ligand contact to Mg(2+). Residues Asp34, Arg58, and Gly81 each coordinate substrate. Residue Arg122 participates in ATP binding. Arg139 contacts substrate.

It belongs to the shikimate kinase family. As to quaternary structure, monomer. Mg(2+) is required as a cofactor.

Its subcellular location is the cytoplasm. The catalysed reaction is shikimate + ATP = 3-phosphoshikimate + ADP + H(+). The protein operates within metabolic intermediate biosynthesis; chorismate biosynthesis; chorismate from D-erythrose 4-phosphate and phosphoenolpyruvate: step 5/7. In terms of biological role, catalyzes the specific phosphorylation of the 3-hydroxyl group of shikimic acid using ATP as a cosubstrate. The protein is Shikimate kinase of Dictyoglomus turgidum (strain DSM 6724 / Z-1310).